Here is a 451-residue protein sequence, read N- to C-terminus: GABA transporter 1 (451 aa).

11 consecutive transmembrane segments (helical) span residues 35–55 (CGFHLTTSIVAPALLSLPYAF), 57–77 (FLGWAAGISCLVGGAAVTFYS), 115–135 (VGPIQMAVCYGVVIANALLGG), 153–173 (LFEFVIIFGCLLLVLAQFPSF), 182–202 (LSLLLCLLYSASAAAASIYIG), 222–242 (VFGIFNAMAIIATTYGNGIIP), 262–282 (MCYLVVIMTFFTVAITGYWAF), 308–328 (FIFLVNLFTVLQLSAVAVVYL), 356–376 (LVVRSLFVVMATIVAAMLPFF), 382–402 (LLGAFGFIPLDFVLPVVFFNF), and 411–431 (FIFWINTVIAVVFSCLGVIAM).

The protein belongs to the amino acid/polyamine transporter 2 family. Amino acid/auxin permease (AAAP) (TC 2.A.18.2) subfamily. As to expression, highly expressed in flowers and at lower levels in roots, leaves and stems.

The protein resides in the cell membrane. In terms of biological role, high affinity gamma-aminobutyric acid (GABA) transporter probably involved in GABA uptake into cells. When expressed in a heterologous system (Xenopus oocytes), imports GABA, butylamine, beta- and L-Alanine, 5-aminovaleric acid, 6-aminocaproic acid and 8-aminocaprylic acid, but does not mediate the transport of proline or glycine betaine. In Arabidopsis thaliana (Mouse-ear cress), this protein is GABA transporter 1 (GAT1).